A 340-amino-acid chain; its full sequence is MFSSLYPLVRAQLFRMDAEDAHHLTLRILGAAGRTGLAGALAPRVPDAPRTVMGLTFRNPVGLAAGLDKDGACIDGLAALGFGFIEVGTVTPRAQPGNPRPRMFRLPQANAVINRMGFNNAGVDQFVKNVQAARYRGILGLNIGKNADTPIERAAEDYLYCLDRVYPFASYVTVNISSPNTKNLRQLQGAGELDALLAALKDKQQRLADMHGKLVPLALKIAPDLDDEQIKSIADTLLRHRFEGVIATNTTLSRTAVAGMQYGDEAGGLSGKPVFDASNAVIRKLRAEVGETVPIIGVGGIFSGEDARAKMAAGASLVQLYTGFIYRGPALVAECVQALR.

Residues 65–69 and Thr-89 contribute to the FMN site; that span reads AGLDK. Position 69 (Lys-69) interacts with substrate. 114 to 118 contributes to the substrate binding site; the sequence is NRMGF. FMN is bound by residues Asn-142 and Asn-175. Substrate is bound at residue Asn-175. The active-site Nucleophile is Ser-178. Asn-180 contributes to the substrate binding site. FMN is bound by residues Lys-220 and Thr-248. 249 to 250 is a substrate binding site; it reads NT. FMN contacts are provided by residues Gly-271, Gly-300, and 321-322; that span reads YT.

The protein belongs to the dihydroorotate dehydrogenase family. Type 2 subfamily. In terms of assembly, monomer. Requires FMN as cofactor.

It localises to the cell membrane. It catalyses the reaction (S)-dihydroorotate + a quinone = orotate + a quinol. The protein operates within pyrimidine metabolism; UMP biosynthesis via de novo pathway; orotate from (S)-dihydroorotate (quinone route): step 1/1. Its function is as follows. Catalyzes the conversion of dihydroorotate to orotate with quinone as electron acceptor. This Paraburkholderia xenovorans (strain LB400) protein is Dihydroorotate dehydrogenase (quinone).